A 1185-amino-acid chain; its full sequence is AT-rich interactive domain-containing protein 5B (1185 aa).

Disordered stretches follow at residues 248 to 281 (PNLK…ESKA), 413 to 550 (KGEE…PDED), 713 to 742 (ISKK…PIAI), 883 to 932 (HQQE…EGKG), and 1033 to 1058 (HLPK…LHGL). Over residues 252 to 261 (GRPRKKKPCP) the composition is skewed to basic residues. The 93-residue stretch at 321–413 (RADEQAFLVA…LILPYERFIK (93 aa)) folds into the ARID domain. Residues 447-461 (IKNENQKSKKEKDNA) are compositionally biased toward basic and acidic residues. The span at 462-471 (QKPQDASEVS) shows a compositional bias: polar residues. Residues 473–487 (EQEKDQESADQKNFT) show a composition bias toward basic and acidic residues. Residues 1034 to 1053 (LPKETSVKEKVPDAEGEGSK) are compositionally biased toward basic and acidic residues.

The protein belongs to the ARID5B family.

The protein resides in the nucleus. In terms of biological role, transcription coactivator that binds to the 5'-AATA[CT]-3' core sequence and plays a key role in adipogenesis and liver development. Required for adipogenesis: regulates triglyceride metabolism in adipocytes by regulating expression of adipogenic genes. This chain is AT-rich interactive domain-containing protein 5B (ARID5B), found in Gallus gallus (Chicken).